The chain runs to 126 residues: Large ribosomal subunit protein bL19 (126 aa).

The protein belongs to the bacterial ribosomal protein bL19 family.

Functionally, this protein is located at the 30S-50S ribosomal subunit interface and may play a role in the structure and function of the aminoacyl-tRNA binding site. In Gluconacetobacter diazotrophicus (strain ATCC 49037 / DSM 5601 / CCUG 37298 / CIP 103539 / LMG 7603 / PAl5), this protein is Large ribosomal subunit protein bL19.